The sequence spans 586 residues: Putative butyrophilin subfamily 2 member A3 (586 aa).

An N-terminal signal peptide occupies residues 1 to 27; that stretch reads MEPAAALHFSRPASLLLLLSLCALVSA. In terms of domain architecture, Ig-like V-type spans 28–139; sequence QVTVVGPTDP…SCNEAILHLV (112 aa). Residues 28-246 are Extracellular-facing; sequence QVTVVGPTDP…SFMPSRSPCV (219 aa). N-linked (GlcNAc...) asparagine glycosylation is found at N45, N112, N214, and N220. Residues C50 and C123 are joined by a disulfide bond. A helical transmembrane segment spans residues 247–267; it reads VILPVIMIILMIPIAICIYWI. Residues 268–586 lie on the Cytoplasmic side of the membrane; the sequence is NNLQKEKKDS…VPQLPARKKV (319 aa). The B30.2/SPRY domain occupies 281-474; sequence TFNLCLSLAG…ILICSAFTGA (194 aa).

The protein belongs to the immunoglobulin superfamily. BTN/MOG family.

It localises to the membrane. This Homo sapiens (Human) protein is Putative butyrophilin subfamily 2 member A3 (BTN2A3P).